Reading from the N-terminus, the 92-residue chain is Alpha-conotoxin FrXXA 2 (92 aa).

Residues 1–24 (MPKLEMMLLVLLILPLPYFDAAGG) form the signal peptide. The propeptide occupies 25–45 (QAVQGDGHGDGMDRYLQRDDR). 4 disulfides stabilise this stretch: C63/C72, C68/C80, C73/C90, and C78/C92.

The protein belongs to the conotoxin D superfamily. In terms of assembly, homodimer; disulfide-linked. Post-translationally, the homodimer contains 10 disulfide bonds. In terms of tissue distribution, expressed by the venom duct.

The protein localises to the secreted. Its function is as follows. Alpha-conotoxins act on postsynaptic membranes, they bind to the nicotinic acetylcholine receptors (nAChR) and thus inhibit them. Through its two C-terminal domains, this homodimeric protein would bind to two nAChR allosteric sites, located outside the nAChR C-loop of the principal binding face and at the adjacent binding interface in a clockwise direction. Component 4b which seems to correspond to this toxin blocks both neuronal and muscular subtypes: human alpha-7/CHRNA7 (IC(50)=125 nM), human alpha-3-beta-2 (CHRNA3-CHRNB2) (IC(50)=282 nM), human alpha-4-beta-2 (CHRNA4-CHRNB2) (IC(50)=697 nM), mouse adult muscular subtype alpha-1-beta-1-delta-epsilon (CHRNA1-CHRNB1-CHRND-CHRNE) (IC(50)=351 nM), and mouse fetal muscular subtype alpha-1-beta-1-gamma-delta (CHRNA1-CHRNB1-CHRNG-CHRND) (IC(50)=447 nM). It shows different dissociation rates towards the different subtypes, with a very slow rate towards alpha-7 subtype (almost irreversible), followed by the adult muscular subtype, the fetal muscular subtype, alpha-3-beta-2 and alpha-4-beta-2 (almost entirely reversible within a few minutes of washing). The polypeptide is Alpha-conotoxin FrXXA 2 (Conus fergusoni (Ferguson's cone)).